A 698-amino-acid polypeptide reads, in one-letter code: Dolichyl-diphosphooligosaccharide--protein glycosyltransferase subunit 2 (698 aa).

Positions 1 to 29 are cleaved as a signal peptide; sequence MAAAGGLPASATLLLLVIAAVAVAPLASA. Residues 30-600 are Lumenal-facing; the sequence is VRPVSDAHRS…RSPEKRPPKE (571 aa). The helical transmembrane segment at 601–621 threads the bilayer; sequence LSFAFTGLTLLPIVGFLIGLM. The Cytoplasmic portion of the chain corresponds to 622 to 638; the sequence is RLGVNLKNFPSLPAPAA. A helical transmembrane segment spans residues 639-659; that stretch reads FASLFHAGIGAVLLLYVLFWI. K660 is a topological domain (lumenal). The chain crosses the membrane as a helical span at residues 661–681; it reads LDLFTTLKYLSFLGVFLVFVG. The Cytoplasmic segment spans residues 682–698; that stretch reads HRALSYLSSTSAKQKTA.

The protein belongs to the SWP1 family. As to quaternary structure, component of the oligosaccharyltransferase (OST) complex.

The protein resides in the endoplasmic reticulum membrane. Its pathway is protein modification; protein glycosylation. Subunit of the oligosaccharyl transferase (OST) complex that catalyzes the initial transfer of a defined glycan (Glc(3)Man(9)GlcNAc(2) in eukaryotes) from the lipid carrier dolichol-pyrophosphate to an asparagine residue within an Asn-X-Ser/Thr consensus motif in nascent polypeptide chains, the first step in protein N-glycosylation. N-glycosylation occurs cotranslationally and the complex associates with the Sec61 complex at the channel-forming translocon complex that mediates protein translocation across the endoplasmic reticulum (ER). All subunits are required for a maximal enzyme activity. This Oryza sativa subsp. japonica (Rice) protein is Dolichyl-diphosphooligosaccharide--protein glycosyltransferase subunit 2 (RPN2).